The sequence spans 299 residues: Lipoyl synthase (299 aa).

[4Fe-4S] cluster contacts are provided by Cys45, Cys50, Cys56, Cys71, Cys75, Cys78, and Ser284. The region spanning 57-273 (YSKGTATFMI…GDVALAKDFL (217 aa)) is the Radical SAM core domain.

This sequence belongs to the radical SAM superfamily. Lipoyl synthase family. It depends on [4Fe-4S] cluster as a cofactor.

Its subcellular location is the cytoplasm. The catalysed reaction is [[Fe-S] cluster scaffold protein carrying a second [4Fe-4S](2+) cluster] + N(6)-octanoyl-L-lysyl-[protein] + 2 oxidized [2Fe-2S]-[ferredoxin] + 2 S-adenosyl-L-methionine + 4 H(+) = [[Fe-S] cluster scaffold protein] + N(6)-[(R)-dihydrolipoyl]-L-lysyl-[protein] + 4 Fe(3+) + 2 hydrogen sulfide + 2 5'-deoxyadenosine + 2 L-methionine + 2 reduced [2Fe-2S]-[ferredoxin]. The protein operates within protein modification; protein lipoylation via endogenous pathway; protein N(6)-(lipoyl)lysine from octanoyl-[acyl-carrier-protein]: step 2/2. Catalyzes the radical-mediated insertion of two sulfur atoms into the C-6 and C-8 positions of the octanoyl moiety bound to the lipoyl domains of lipoate-dependent enzymes, thereby converting the octanoylated domains into lipoylated derivatives. The chain is Lipoyl synthase from Desulfotalea psychrophila (strain LSv54 / DSM 12343).